The chain runs to 798 residues: MARYPVFTFVFLICLVLCTNAQQGGTECLKANAKSCGECIQAGPNCGWCTKVDFLQEGEPTSARCDDLAALKTKGCPEDDIQNPRGRKQKLKDIPITSKGKGERMDPANITQLRPQQLVFELRSGEPQTFNLTFRRAEDYPIDLYYLMDLSFSMKDDLENVKSLGTALMTEMEKITSDFRIGFGSFVEKTVMPYISTTPAKLLNPCTNDQNCTSPFSYKNVLNLTKDGKLFNDLVGKQQISGNLDSPEGGFDAIMQVAVCGEQIGWRNVTRLLVFSTDAGFHFAGDGKLGGIVLPNDGRCHLHGNMYTMSHYYDYPSIAHLVQKLSENNIQTIFAVTEDFQPVYQELKNLIPKSAVGTLSSNSSNVIQLIIDSYNSLSSELILENSKLPEGVTISYRSFCKNGVKGTGEDGRKCSNISIGDQVEFEISVTAHKCPKKGQAESIKIKPLGFNEEVEIVLQFICECDCQDKGTPNSPECHFGNGTFECGACRCNEGRIGKECECSTDEVNSEDMDAYCRRENSSEICSNNGDCICGQCVCKKRDNPNEVYSGKYCECDNFNCDRSNGLICGGKGVCKCRVCECFPNYSGSACDCSEDTSTCMAKNGQICNGRGICDCGRCKCTDPKFQGPTCELCQTCVGVCTEHKECVQCRAFQKGEKQDVCMEQCMHFNISLVDSREELPQPGQAEALTHCKEKDAEDCWFYFTYSVDSKNEVMVHVVKEPECPSGPDIIPIVAGVVAGIVLIGLALLLIWKLLMIIHDRREFAKFEKEKMNAKWDTGENPIYKSAVATVVNPKYEGK.

The N-terminal stretch at 1 to 21 (MARYPVFTFVFLICLVLCTNA) is a signal peptide. Residues 22–727 (QQGGTECLKA…VKEPECPSGP (706 aa)) lie on the Extracellular side of the membrane. The PSI domain occupies 27–77 (ECLKANAKSCGECIQAGPNCGWCTKVDFLQEGEPTSARCDDLAALKTKGCP). 28 cysteine pairs are disulfide-bonded: cysteine 28–cysteine 46, cysteine 36–cysteine 464, cysteine 39–cysteine 65, cysteine 49–cysteine 76, cysteine 206–cysteine 212, cysteine 260–cysteine 300, cysteine 400–cysteine 414, cysteine 434–cysteine 462, cysteine 466–cysteine 486, cysteine 477–cysteine 489, cysteine 491–cysteine 500, cysteine 502–cysteine 533, cysteine 516–cysteine 531, cysteine 525–cysteine 536, cysteine 538–cysteine 553, cysteine 555–cysteine 576, cysteine 560–cysteine 574, cysteine 568–cysteine 579, cysteine 581–cysteine 590, cysteine 592–cysteine 615, cysteine 599–cysteine 613, cysteine 607–cysteine 618, cysteine 620–cysteine 630, cysteine 633–cysteine 636, cysteine 640–cysteine 691, cysteine 646–cysteine 665, cysteine 649–cysteine 661, and cysteine 699–cysteine 723. The tract at residues 77-106 (PEDDIQNPRGRKQKLKDIPITSKGKGERMD) is disordered. Asparagine 109 and asparagine 131 each carry an N-linked (GlcNAc...) asparagine glycan. One can recognise a VWFA domain in the interval 139-377 (DYPIDLYYLM…QLIIDSYNSL (239 aa)). Serine 151 and serine 153 together coordinate Mg(2+). Ca(2+)-binding residues include serine 153, aspartate 156, aspartate 157, and glutamate 188. Asparagine 211 and asparagine 223 each carry an N-linked (GlcNAc...) asparagine glycan. Ca(2+) contacts are provided by asparagine 243, aspartate 245, proline 247, and glutamate 248. Glutamate 248 lines the Mg(2+) pocket. 2 N-linked (GlcNAc...) asparagine glycosylation sites follow: asparagine 268 and asparagine 362. N-linked (GlcNAc...) asparagine glycosylation occurs at asparagine 416. 4 I-EGF domains span residues 466–501 (CQDKGTPNSPECHFGNGTFECGACRCNEGRIGKECE), 502–554 (CSTD…KYCE), 555–591 (CDNFNCDRSNGLICGGKGVCKCRVCECFPNYSGSACD), and 592–631 (CSEDTSTCMAKNGQICNGRGICDCGRCKCTDPKFQGPTCE). Residue asparagine 481 is glycosylated (N-linked (GlcNAc...) asparagine). N-linked (GlcNAc...) asparagine glycosylation occurs at asparagine 520. N-linked (GlcNAc...) asparagine glycosylation is present at asparagine 584. Residue asparagine 669 is glycosylated (N-linked (GlcNAc...) asparagine). A helical transmembrane segment spans residues 728–751 (DIIPIVAGVVAGIVLIGLALLLIW). Residues 752–798 (KLLMIIHDRREFAKFEKEKMNAKWDTGENPIYKSAVATVVNPKYEGK) lie on the Cytoplasmic side of the membrane. The residue at position 783 (tyrosine 783) is a Phosphotyrosine.

Belongs to the integrin beta chain family. In terms of assembly, heterodimer of an alpha and a beta subunit.

The protein localises to the cell membrane. It localises to the cell projection. The protein resides in the invadopodium membrane. It is found in the ruffle membrane. Its subcellular location is the melanosome. The protein localises to the cleavage furrow. It localises to the lamellipodium. The protein resides in the ruffle. Beta integrins associate with alpha subunits to form receptor complexes that recognize the sequence R-G-D in a wide array of ligands. May be involved in osteoblast compaction. May play role in myoblast differentiation and fusion during skeletal myogenesis. This Xenopus laevis (African clawed frog) protein is Integrin beta-1-B (itgb1-b).